The following is a 128-amino-acid chain: Large-conductance mechanosensitive channel (128 aa).

2 consecutive transmembrane segments (helical) span residues 10–30 (FAMR…GAFG) and 76–96 (GLFI…FMMV).

Belongs to the MscL family. In terms of assembly, homopentamer.

The protein resides in the cell inner membrane. Its function is as follows. Channel that opens in response to stretch forces in the membrane lipid bilayer. May participate in the regulation of osmotic pressure changes within the cell. The sequence is that of Large-conductance mechanosensitive channel from Mannheimia succiniciproducens (strain KCTC 0769BP / MBEL55E).